The sequence spans 443 residues: Protein IQ-DOMAIN 11 (443 aa).

The tract at residues 5 to 20 (KGLFTVLKRIFISEVN) is calmodulin-binding. Short sequence motifs (nuclear localization signal) lie at residues 11–18 (LKRIFISE) and 27–34 (RRKWTFWK). A disordered region spans residues 44 to 65 (ITAPPEHRTSHESHEEQKEEIV). Residues 48 to 64 (PEHRTSHESHEEQKEEI) are compositionally biased toward basic and acidic residues. IQ domains lie at 113 to 138 (AATRIQTAFRGHLARKALRALKGIVK) and 139 to 161 (LQAYIRGRAVRRQAMTTLKCLQS). A compositionally biased stretch (basic and acidic residues) spans 277–293 (FSSKTKPKDETLNEKQL). The segment at 277–361 (FSSKTKPKDE…PRSFDTQSES (85 aa)) is disordered.

Belongs to the IQD family. As to quaternary structure, binds to multiple calmodulin (CaM) in the presence of Ca(2+) and CaM-like proteins. Expressed in hypocotyls, cotyledons, leaves and petioles.

It is found in the nucleus. The protein localises to the cytoplasm. Its subcellular location is the cytoskeleton. Functionally, may be involved in cooperative interactions with calmodulins or calmodulin-like proteins. Recruits calmodulin proteins to microtubules, thus being a potential scaffold in cellular signaling and trafficking. Regulates cell shape and elongation in aerial organs (i.e. epidermis pavement cells) probably by regulating cortical microtubules (MT) arrays orientation. May associate with nucleic acids and regulate gene expression at the transcriptional or post-transcriptional level. The chain is Protein IQ-DOMAIN 11 from Arabidopsis thaliana (Mouse-ear cress).